Reading from the N-terminus, the 473-residue chain is Double-stranded RNA-binding protein 7 (473 aa).

Pro residues predominate over residues 1–10 (MDMPPTPLPP). Residues 1 to 22 (MDMPPTPLPPETANTSPAPNGA) are disordered. DRBM domains lie at 33–102 (VFKS…EIVK) and 118–185 (LCKN…AIQG). 3 stretches are compositionally biased toward basic and acidic residues: residues 286–307 (KRVEAEPPRDIEMVQPDKENQH), 317–327 (DEARVEQEPSR), and 416–427 (VDARVVKEESPR). 2 disordered regions span residues 286 to 329 (KRVE…SRDI) and 393 to 473 (QLNE…MSEE). Residues 433–450 (EATNMKETPKNSAVCNSP) show a composition bias toward polar residues.

Functionally, binds double-stranded RNA. The sequence is that of Double-stranded RNA-binding protein 7 (DRB7) from Oryza sativa subsp. japonica (Rice).